The following is a 483-amino-acid chain: MIQVLLVTLCLAAFPYQGNSIILESGNVNDYEVLYPQKVTALPKGAVQPKYEDTMQYEFKVNGEPVVLHLEKNKGLFSKDYSETHYSSDGRKITTNPPVEDHCYYHGRIQNDADSTASISACNGLKGHFKLQGETYLIEPLKLSDSEAHAVYKYENVEKEDEAPKMCGVTQTNWKSDKPIKKASQLNLTPEQQRFPQRYIELVVVADHRMFTKYNGNLNTIRIWVHELVNTMNVFYRPLNIHVSLTDLEVWSDQDLINVQPAAADTLEAFGDWRETVLLNRISHDNAQLLTAIELDGETIGLANRGTMCDPKLSTGIVQDHSAINLWVAVTMAHEMGHNLGISHDGNQCHCDANSCIMSEELRQQLSFEFSDCSQNQYQTFLTDHNPQCMLNEPLRTDIVSTPVSGNELWETGEESDFDAPANPCCDAATCKLTPGSQCAEGLCCDQCKFMKEGTVCHRAKGDDLDDYCNGISAGCPRNPFHA.

Residues 1–20 (MIQVLLVTLCLAAFPYQGNS) form the signal peptide. A propeptide spanning residues 21 to 191 (IILESGNVND…KASQLNLTPE (171 aa)) is cleaved from the precursor. A Peptidase M12B domain is found at 198 to 394 (RYIELVVVAD…HNPQCMLNEP (197 aa)). Residues Glu-201 and Asp-285 each coordinate Ca(2+). 3 disulfide bridges follow: Cys-309–Cys-389, Cys-349–Cys-373, and Cys-351–Cys-356. Residue His-334 coordinates Zn(2+). Residue Glu-335 is part of the active site. 2 residues coordinate Zn(2+): His-338 and His-344. Ca(2+) is bound by residues Cys-389 and Asn-392. Positions 395–414 (LRTDIVSTPVSGNELWETGE) are excised as a propeptide. The region spanning 402-483 (TPVSGNELWE…AGCPRNPFHA (82 aa)) is the Disintegrin domain. 4 cysteine pairs are disulfide-bonded: Cys-425/Cys-448, Cys-439/Cys-445, Cys-444/Cys-469, and Cys-457/Cys-476. The Cell attachment site; atypical (KGD) motif lies at 461-463 (KGD).

Belongs to the venom metalloproteinase (M12B) family. P-II subfamily. P-IIe sub-subfamily. Heterodimer with piscivostatin-alpha; disulfide-linked (disintegrin). It depends on Zn(2+) as a cofactor. In terms of tissue distribution, expressed by the venom gland.

Its subcellular location is the secreted. Functionally, impairs hemostasis in the envenomed animal. Inhibits platelet aggregation induced by ADP. Acts by inhibiting fibrinogen interaction with platelet receptors GPIIb/GPIIIa (ITGA2B/ITGB3). Also inhibits platelet aggregate dissociation in human platelet-rich plasma. In Agkistrodon piscivorus piscivorus (Eastern cottonmouth), this protein is Zinc metalloproteinase/disintegrin.